The primary structure comprises 372 residues: Alanine dehydrogenase 1 (372 aa).

The active site involves His-94. 170–200 (TYVIFGGGVAATNAANVALGLNAKVIIIELN) is a binding site for NAD(+).

Belongs to the AlaDH/PNT family.

It carries out the reaction L-alanine + NAD(+) + H2O = pyruvate + NH4(+) + NADH + H(+). Its pathway is amino-acid degradation; L-alanine degradation via dehydrogenase pathway; NH(3) and pyruvate from L-alanine: step 1/1. Its function is as follows. May play a role in cell wall synthesis as L-alanine is an important constituent of the peptidoglycan layer. The chain is Alanine dehydrogenase 1 (ald1) from Staphylococcus aureus (strain bovine RF122 / ET3-1).